Consider the following 147-residue polypeptide: D-aminoacyl-tRNA deacylase (147 aa).

The Gly-cisPro motif, important for rejection of L-amino acids motif lies at 136 to 137 (GP).

Belongs to the DTD family. As to quaternary structure, homodimer.

The protein localises to the cytoplasm. It catalyses the reaction glycyl-tRNA(Ala) + H2O = tRNA(Ala) + glycine + H(+). It carries out the reaction a D-aminoacyl-tRNA + H2O = a tRNA + a D-alpha-amino acid + H(+). An aminoacyl-tRNA editing enzyme that deacylates mischarged D-aminoacyl-tRNAs. Also deacylates mischarged glycyl-tRNA(Ala), protecting cells against glycine mischarging by AlaRS. Acts via tRNA-based rather than protein-based catalysis; rejects L-amino acids rather than detecting D-amino acids in the active site. By recycling D-aminoacyl-tRNA to D-amino acids and free tRNA molecules, this enzyme counteracts the toxicity associated with the formation of D-aminoacyl-tRNA entities in vivo and helps enforce protein L-homochirality. The sequence is that of D-aminoacyl-tRNA deacylase from Streptococcus equi subsp. equi (strain 4047).